A 1513-amino-acid polypeptide reads, in one-letter code: Protein tincar (1513 aa).

Topologically, residues 1-77 are cytoplasmic; the sequence is MGGKHQGSGA…DSGSYLHLNS (77 aa). A helical transmembrane segment spans residues 78 to 98; the sequence is LWSIWYGVMLTLFQGYLAMHG. At 99-120 the chain is on the extracellular side; it reads AYRFLGCSLIPWKIEPVAELNL. The helical transmembrane segment at 121 to 141 threads the bilayer; it reads QIVLSGVVFILLPVFFTSAVF. Residues 142–181 are Cytoplasmic-facing; sequence KVGNLANDGIKLATGARERRCTLSPHDGLEEESRGGTLRA. The helical transmembrane segment at 182–202 threads the bilayer; that stretch reads LWTHGGPTAAFVHIVIALCLL. Residues 203-668 lie on the Extracellular side of the membrane; it reads LPRLLLEARI…VAIFSQPPSA (466 aa). 3 disordered regions span residues 247–266, 354–373, and 383–532; these read TPFP…HQHG, ERQE…DEGV, and MPDF…SIHR. The segment covering 427–466 has biased composition (low complexity); sequence ASSSSSSTTSTTTTTTTSTTTTAATTTSTRGTSTTTTTTT. Over residues 478–507 the composition is skewed to basic residues; that stretch reads SAHHHHGKSRKHHKHHNKQRQQQPPRRHHV. Positions 523 to 532 are enriched in basic and acidic residues; it reads TTTRDSSIHR. Residues 669–689 traverse the membrane as a helical segment; the sequence is EFVNLLCALLVWSVRYPAVFW. Residues 690–696 lie on the Cytoplasmic side of the membrane; sequence NTSKAFA. A helical membrane pass occupies residues 697 to 717; it reads CVFSLQMVVAALDIILGYVGI. Over 718-736 the chain is Extracellular; that stretch reads SNLYKLQIYAEAMPVHQPG. A helical transmembrane segment spans residues 737 to 757; sequence LILNAVVTLALYLLSTALVLA. The Cytoplasmic portion of the chain corresponds to 758–787; the sequence is SSMVMYLYGHGRLATRMRDRSIITLKTHQT. Residues 788–808 traverse the membrane as a helical segment; it reads WIYFAHCASLCFVLALAVVKA. Residues 809–826 lie on the Extracellular side of the membrane; it reads PLLNDLSATYKNNLHCPT. A helical transmembrane segment spans residues 827 to 847; that stretch reads FLAALVGVTHLLLWIVIWLCL. At 848–1513 the chain is on the cytoplasmic side; sequence TIKRRWHFKL…CGLYVTAQLH (666 aa). Low complexity-rich tracts occupy residues 879–903 and 1060–1071; these read SSGQ…VNGG and QQQQQQQQQQRQ. 5 disordered regions span residues 879–913, 1045–1090, 1115–1155, 1173–1214, and 1231–1335; these read SSGQ…MSTA, EYDE…SGLG, ASTS…HSAG, EHHH…PHQH, and AHIA…DPAA. Pro residues predominate over residues 1122-1149; it reads PPQPSAQAPPPPPPLPIKGAPVPQPPAV. Composition is skewed to low complexity over residues 1179-1208 and 1255-1285; these read LQHS…LQQQ and TPRS…SGVH. The segment covering 1286 to 1296 has biased composition (basic and acidic residues); that stretch reads SGEERELEVII. The span at 1303–1314 shows a compositional bias: pro residues; the sequence is KPPPRPPQPPIQ. Residues 1324–1335 are compositionally biased toward polar residues; the sequence is MRMSSFNADPAA.

Expression varies in tissues throughout development. At stage 5, expressed in the embryo dorsal region followed by expression in a striped pattern at stage 6. During gastrulation, expressed in ventral region and ventral nerve cord. Also detected in many neurons in the externa sensilla and chordotonal organ. At stage 16, expressed on the surface of the midgut. Additionally, expressed in a subset of cardioblasts (Tin+ subpopulation) during dorsal vessel formation. In third-instar larval tissues, expressed in the eye and antennal disks. In the antennal disks, expressed in the second antennal segments. In the eye disks, strongest expression found in the ocelli, and in the differentiating ommatidial cells. Also expressed in all cells within and in the vicinity of the morphogenetic furrow.

It is found in the membrane. Involved in eye morphogenesis. May be essential for the normal differentiation of ommatidial cells. The chain is Protein tincar (tinc) from Drosophila melanogaster (Fruit fly).